Here is an 80-residue protein sequence, read N- to C-terminus: Toxin Acra I-2 (80 aa).

The signal sequence occupies residues 1-22 (MMKLALFSIIVILFSLIGSIHG). The LCN-type CS-alpha/beta domain occupies 25–80 (VPGNYPLDSSGNKYPCTVLGDNQSCIDVCKKHGVKYGYCYSFKCWCEFLEDKNVSI). 3 disulfide bridges follow: Cys-40/Cys-63, Cys-49/Cys-68, and Cys-53/Cys-70.

Expressed by the venom gland.

It is found in the secreted. In terms of biological role, probable neurotoxin that inhibits ion channels. Is toxic to mice. Is about 2.8% of the total protein in the venom. The polypeptide is Toxin Acra I-2 (Androctonus crassicauda (Arabian fat-tailed scorpion)).